Reading from the N-terminus, the 830-residue chain is Isethionate sulfite-lyase (830 aa).

Residues Lys-31 to Val-700 enclose the PFL domain. Residues Arg-189, Gln-193, Cys-468–Glu-470, and Arg-678 each bind 2-hydroxyethane-1-sulfonate. The Cysteine radical intermediate role is filled by Cys-468. Residue Glu-470 is the Proton acceptor of the active site. The 124-residue stretch at Asp-707–Met-830 folds into the Glycine radical domain. A Glycine radical modification is found at Gly-805.

Belongs to the glycyl radical enzyme (GRE) family. Homodimer. Post-translationally, requires the activating protein IslB to generate the key active site glycyl radical on Gly-805 that is involved in catalysis.

The catalysed reaction is 2-hydroxyethane-1-sulfonate = acetaldehyde + sulfite + H(+). The protein operates within organosulfur degradation; alkanesulfonate degradation. Involved in an anaerobic respiration pathway that converts the sulfonate taurine (2-aminoethanesulfonate) to ammonia, acetate and sulfide. Catalyzes the radical-mediated C-S bond cleavage of isethionate (2-hydroxyethanesulfonate) to form sulfite and acetaldehyde. Is not able to use any alternate organosulfonate or (S)-1,2-propanediol or choline as a substrate, showing that this enzyme is highly specific for isethionate. The protein is Isethionate sulfite-lyase of Bilophila wadsworthia (strain 3_1_6).